The primary structure comprises 86 residues: Sodium channel neurotoxin MeuNaTxalpha-4 (86 aa).

The signal sequence occupies residues 1-19; it reads MNYLILISFALLVITGVES. Residues 21-85 enclose the LCN-type CS-alpha/beta domain; it reads RDAYIAKPHN…VPIRIPGKCH (65 aa). 4 cysteine pairs are disulfide-bonded: Cys-31–Cys-84, Cys-35–Cys-57, Cys-43–Cys-67, and Cys-47–Cys-69. Position 86 (Arg-86) is a propeptide, removed by a carboxypeptidase.

It belongs to the long (4 C-C) scorpion toxin superfamily. Sodium channel inhibitor family. Alpha subfamily. Expressed by the venom gland.

Its subcellular location is the secreted. Alpha toxins bind voltage-independently at site-3 of sodium channels (Nav) and inhibit the inactivation of the activated channels, thereby blocking neuronal transmission. This toxin inhibits inactivation of drosophila DmNav1 (EC(50)=130 nM). The chain is Sodium channel neurotoxin MeuNaTxalpha-4 from Mesobuthus eupeus (Lesser Asian scorpion).